Reading from the N-terminus, the 289-residue chain is Probable 2-keto-3-deoxyxylonate dehydratase (289 aa).

Mg(2+) contacts are provided by Glu-144, Glu-146, and Asp-164.

The protein belongs to the FAH family.

It catalyses the reaction 2-dehydro-3-deoxy-D-arabinonate = 2,5-dioxopentanoate + H2O. It participates in carbohydrate metabolism; D-xylose degradation. Functionally, probable 2-keto-3-deoxyxylonate dehydratase involved in the degradation of D-xylose, a major component of hemicelluloses such as xylan. Catalyzes the fourth reaction in the xylose utilization pathway through dehydratation of 2-dehydro-3-deoxy-D-xylonate into alpha-ketoglutarate semialdehyde (2,5-dioxopentanoate). This Haloferax volcanii (strain ATCC 29605 / DSM 3757 / JCM 8879 / NBRC 14742 / NCIMB 2012 / VKM B-1768 / DS2) (Halobacterium volcanii) protein is Probable 2-keto-3-deoxyxylonate dehydratase.